We begin with the raw amino-acid sequence, 1434 residues long: MWSLTANEDEDESATAHFFLGAGDEGLGTCGIGMRTGESDSELLEDEEDEVPPEPQIIVGICAMTKKSKSKPMTQILERLCRFDYLTVVILGEDVILNEPVENWPPCHCLISFHSKGFPLDKAVAYSKLRNPFLINDLTMQYYIQDRREVYRILQEEGIDLPRYAVLNRDPACPEECNLIEGEDQVEVNGAVFPKPFVEKPVSAEDHNVYIYYPSSAGGGSQRLFRKIGSRSSVYSPESSVRKTGSYIYEEFMPTDGTDVKVYTVGPDYAHAEARKSPALDGKVERDSEGKEVRYPVMLTAMEKLVARKVCVAFKQTVCGFDLLRANGHSFVCDVNGFSFVKNSMKYYDDCAKILGNTIMRELAPQFQIPWSIPTEAEDIPIVPTTSGTMMELRCVIAIIRHGDRTPKQKMKMEVTHPRFFALFEKHGGYKTGKLKLKRPEQLQEVLDITRLLLAELEKEPGAEIEEKTGKLEQLKSVLEMYGHFSGINRKVQLTYYPHGVKASSEGQDLQREPPAPSLLLVLKWGGELTPDGRVQAEELGRAFRCMYPGGQGDYAGFPGCGLLRLHSTFRHDLKIYASDEGRVQMTAAAFAKGLLALEGELTPILVQMVKSANMNGLLDSDSDSLSSCQHRVKARLHHILQQDAPFGPEDYDQLAPTGSTSLLNSMSVIQNPVKVCDQVFALIENLTHQIRERMQDPSSVDLQLYHSETLELMLQRWSKLERDFRQKSGRYDISKIPDIYDCVKYDVQHNGSLGLQGTAELLRLSKALADVVIPQEYGISREEKVEIAVGFCLPLLRKILLDLQRTHEDESVNKLHPLYSRGVLSPGRHVRTRLYFTSESHVHSLLSVFRYGGLLDETKDAQWQRALAYLSAISELNYMTQIVIMLYEDNTRDPLSEERFHVELHFSPGVKGVEEGSAPAGCGFRPASSENEEMKTDPGSIENLCPAKPSDEPDRALQTSPQPVEGTGLPRRSPLIRNRKAGSMEVLSETSSSRPGGYRLFSSSRPPTEMKQSGLGSQCTGLFSTTVLGGSSSAPNLQDYARTHGKKLPPAGLKHRDELLFVPAVKRFSVSFAKHPTNGFEGCSMVPTIYPLETLHNALSLRQVSEFLTKVCQRHTDAHAQASAALFDSMHNHQASDNPFSPPRTLHSPPLQLRHRSEKPPWYSSGPSSTVSSAGPSSPTTVDGNSHFGFSDQSSVNTQMIEEKQGLGLLQETPGDGTPEFHIELAESTQSPQEPPVEISPPGSQDDTEVNQTCQEVPDTIQPCHDILEEIGQPNQEVPDISQLLLKNHDTATNTCQPCQASQLSKKVYEEICQLCQDNPEESNQLCQEVSVELGRMVHRFPVSIGSTTQETLMEIGRPTQEIPEEPCQEFSEKVGMLTQKASAISELSQDILETDNPSQELSEETDLQAQEVSEEIDQEPEVVDELSNEDIS.

Residue K66–K67 participates in substrate binding. ATP-binding positions include R147, K200, H207, R226, E250–M253, and D259–K261. R226–K227 provides a ligand contact to substrate. K261 and R275 together coordinate substrate. ATP contacts are provided by residues S277, D322, and D334 to N336. Residue S339–K342 participates in substrate binding. The polyphosphoinositide-binding domain stretch occupies residues P384–A455. The tract at residues E916–G1017 is disordered. 2 positions are modified to phosphoserine: S941 and S984. The span at F1002–G1017 shows a compositional bias: polar residues. Phosphoserine is present on residues S1034, S1070, S1142, and S1149. Disordered regions lie at residues N1133–D1193, E1228–V1251, and T1396–S1434. Residues S1165 to V1183 show a composition bias toward low complexity. Over residues L1403–S1434 the composition is skewed to acidic residues.

It belongs to the histidine acid phosphatase family. VIP1 subfamily.

It is found in the cytoplasm. The protein localises to the cytosol. The protein resides in the cell membrane. It carries out the reaction 1D-myo-inositol hexakisphosphate + ATP = 1-diphospho-1D-myo-inositol 2,3,4,5,6-pentakisphosphate + ADP. The catalysed reaction is 5-diphospho-1D-myo-inositol 1,2,3,4,6-pentakisphosphate + ATP + H(+) = 1,5-bis(diphospho)-1D-myo-inositol 2,3,4,6-tetrakisphosphate + ADP. Bifunctional inositol kinase that acts in concert with the IP6K kinases IP6K1, IP6K2 and IP6K3 to synthesize the diphosphate group-containing inositol pyrophosphates diphosphoinositol pentakisphosphate, PP-InsP5, and bis-diphosphoinositol tetrakisphosphate, (PP)2-InsP4. PP-InsP5 and (PP)2-InsP4, also respectively called InsP7 and InsP8, regulate a variety of cellular processes, including apoptosis, vesicle trafficking, cytoskeletal dynamics, exocytosis, insulin signaling and neutrophil activation. Phosphorylates inositol hexakisphosphate (InsP6) at position 1 to produce PP-InsP5 which is in turn phosphorylated by IP6Ks to produce (PP)2-InsP4. Alternatively, phosphorylates PP-InsP5 at position 1, produced by IP6Ks from InsP6, to produce (PP)2-InsP4. Activated when cells are exposed to hyperosmotic stress. This chain is Inositol hexakisphosphate and diphosphoinositol-pentakisphosphate kinase 1, found in Rattus norvegicus (Rat).